Here is a 187-residue protein sequence, read N- to C-terminus: Large ribosomal subunit protein uL6 (187 aa).

The protein belongs to the universal ribosomal protein uL6 family. As to quaternary structure, part of the 50S ribosomal subunit.

In terms of biological role, this protein binds to the 23S rRNA, and is important in its secondary structure. It is located near the subunit interface in the base of the L7/L12 stalk, and near the tRNA binding site of the peptidyltransferase center. This chain is Large ribosomal subunit protein uL6, found in Thermosynechococcus vestitus (strain NIES-2133 / IAM M-273 / BP-1).